The primary structure comprises 404 residues: Keratin, type I cuticular Ha3-I (404 aa).

Residues 1–56 form a head region; it reads MSYSCGLPNLSCRTSCSSRPCVPPSCHGCTLPGACNIPANVSNCNWFCEGSFNGSE. One can recognise an IF rod domain in the interval 56-367; it reads EKETMQFLND…SLLESEDCKL (312 aa). Positions 57 to 91 are coil 1A; the sequence is KETMQFLNDRLASYLEKVRQLERDNAELENLIRER. The interval 92–102 is linker 1; sequence SQQQEPLVCAS. Residues 103 to 203 form a coil 1B region; the sequence is YQSYFKTIEE…HEQEVNTLRC (101 aa). Positions 204-219 are linker 12; it reads QLGGRLNVEVDAAPAV. Residues 220–363 are coil 2; it reads DLNQVLNETR…NTYRSLLESE (144 aa). The interval 364-404 is tail; sequence DCKLPSNPCAITNACDKSTGPCISNPCGPRARCGPCNTFGY.

The protein belongs to the intermediate filament family.

The protein is Keratin, type I cuticular Ha3-I of Pan troglodytes (Chimpanzee).